The chain runs to 1392 residues: DNA-directed RNA polymerase subunit beta'' (1392 aa).

C224, C295, C302, and C305 together coordinate Zn(2+).

The protein belongs to the RNA polymerase beta' chain family. RpoC2 subfamily. As to quaternary structure, in plastids the minimal PEP RNA polymerase catalytic core is composed of four subunits: alpha, beta, beta', and beta''. When a (nuclear-encoded) sigma factor is associated with the core the holoenzyme is formed, which can initiate transcription. Zn(2+) is required as a cofactor.

It is found in the plastid. The protein localises to the chloroplast. The enzyme catalyses RNA(n) + a ribonucleoside 5'-triphosphate = RNA(n+1) + diphosphate. Functionally, DNA-dependent RNA polymerase catalyzes the transcription of DNA into RNA using the four ribonucleoside triphosphates as substrates. The protein is DNA-directed RNA polymerase subunit beta'' of Solanum lycopersicum (Tomato).